A 298-amino-acid chain; its full sequence is Glycine--tRNA ligase alpha subunit (298 aa).

The protein belongs to the class-II aminoacyl-tRNA synthetase family. Tetramer of two alpha and two beta subunits.

The protein resides in the cytoplasm. It carries out the reaction tRNA(Gly) + glycine + ATP = glycyl-tRNA(Gly) + AMP + diphosphate. In Helicobacter pylori (strain G27), this protein is Glycine--tRNA ligase alpha subunit.